The following is a 69-amino-acid chain: MKMIKVKVIGRNIEKEIEWREGMKVRDILRAVGFNTESAIAKVNGKVVLEDDEVKDGDFVEVIPVVSGG.

A Glycyl lysine isopeptide (Lys-Gly) (interchain with G-Cter in SAMP2) cross-link involves residue lysine 55. 1-thioglycine; alternate is present on glycine 69. A Glycyl adenylate; alternate modification is found at glycine 69. Residue glycine 69 forms a Glycyl lysine isopeptide (Gly-Lys) (interchain with K-? in acceptor proteins); alternate linkage.

Post-translationally, the C-terminal glycine is likely acyl-adenylated (-COAMP) by UbaA, and also probably thiocarboxylated (-COSH) to function in sulfur transfer.

Functionally, functions as a protein modifier covalently attached to lysine residues of substrate proteins, as well as a sulfur carrier in tRNA thiolation. The protein modification process is termed sampylation and involves the formation of an isopeptide bond between the SAMP2 C-terminal glycine carboxylate and the epsilon-amino group of lysine residues on target proteins. Is able to form polymeric chains with itself likely at Lys-55, similar to ubiquitin and other ubiquitin-like proteins. May serve as a proteolytic signal in the cell to target proteins for degradation by proteasomes. The polypeptide is Small archaeal modifier protein 2 (Pyrococcus furiosus (strain ATCC 43587 / DSM 3638 / JCM 8422 / Vc1)).